A 217-amino-acid polypeptide reads, in one-letter code: Harpin secretion protein HrcR (217 aa).

The next 4 helical transmembrane spans lie at 11 to 31 (FALF…CTCF), 52 to 72 (PNMA…APVF), 158 to 178 (IGFL…NVLL), and 185 to 205 (VAPM…INGW).

Belongs to the FliP/MopC/SpaP family.

The protein localises to the cell membrane. In terms of biological role, required for the secretion of harpin. This chain is Harpin secretion protein HrcR (hrcR), found in Erwinia amylovora (Fire blight bacteria).